The sequence spans 778 residues: ATP-dependent RNA helicase dbp7 (778 aa).

The disordered stretch occupies residues Q20–A144. Positions R47–N58 are enriched in basic and acidic residues. Residues G61–G72 show a composition bias toward polar residues. Positions Q92–G110 are enriched in gly residues. Residues N125–K140 show a composition bias toward basic and acidic residues. A Q motif motif is present at residues D151–K180. A Helicase ATP-binding domain is found at T184–I385. A197 to T204 is an ATP binding site. The DEAD box motif lies at D321 to D324. Residues Q411–I625 form the Helicase C-terminal domain. A compositionally biased stretch (acidic residues) spans L470–S479. Disordered stretches follow at residues L470–P503 and G700–A778. Basic and acidic residues-rich tracts occupy residues D480 to P492 and P709 to S724.

It belongs to the DEAD box helicase family. DDX31/DBP7 subfamily.

It localises to the nucleus. Its subcellular location is the nucleolus. The enzyme catalyses ATP + H2O = ADP + phosphate + H(+). Its function is as follows. ATP-binding RNA helicase involved in the biogenesis of 60S ribosomal subunits and is required for the normal formation of 25S and 5.8S rRNAs. This chain is ATP-dependent RNA helicase dbp7 (dbp7), found in Emericella nidulans (strain FGSC A4 / ATCC 38163 / CBS 112.46 / NRRL 194 / M139) (Aspergillus nidulans).